The following is a 420-amino-acid chain: Glucose-1-phosphate adenylyltransferase (420 aa).

Alpha-D-glucose 1-phosphate contacts are provided by residues Tyr107, Gly172, 187–188 (EK), and Ser205.

This sequence belongs to the bacterial/plant glucose-1-phosphate adenylyltransferase family. In terms of assembly, homotetramer.

The catalysed reaction is alpha-D-glucose 1-phosphate + ATP + H(+) = ADP-alpha-D-glucose + diphosphate. It participates in glycan biosynthesis; glycogen biosynthesis. Its function is as follows. Involved in the biosynthesis of ADP-glucose, a building block required for the elongation reactions to produce glycogen. Catalyzes the reaction between ATP and alpha-D-glucose 1-phosphate (G1P) to produce pyrophosphate and ADP-Glc. This Rhizobium radiobacter (Agrobacterium tumefaciens) protein is Glucose-1-phosphate adenylyltransferase.